Consider the following 81-residue polypeptide: Putative defensin-like protein 25 (81 aa).

Positions 1–23 (MASLKVFSFALILVLTFSVDVEG) are cleaved as a signal peptide. 4 cysteine pairs are disulfide-bonded: cysteine 33–cysteine 81, cysteine 43–cysteine 68, cysteine 52–cysteine 77, and cysteine 56–cysteine 79.

It belongs to the DEFL family.

The protein resides in the secreted. The polypeptide is Putative defensin-like protein 25 (Arabidopsis thaliana (Mouse-ear cress)).